The chain runs to 148 residues: MNIELKLLNKEIIKEVPEYGTEGSAAVDLRACLSEAEFLSPGECKLIGTGIAINIANPNYAAMILPRSGLGHKKGLVLGNGTGLIDSDYQGELMVSCFNRSQEVIEIEPMMRFAQLVVVPVVQAKFDIVEEFSQRTIRSAGGFGHTGV.

Residues 67–69 (RSG), Asn80, 84–86 (LID), and Met94 each bind substrate.

The protein belongs to the dUTPase family. The cofactor is Mg(2+).

It catalyses the reaction dUTP + H2O = dUMP + diphosphate + H(+). It participates in pyrimidine metabolism; dUMP biosynthesis; dUMP from dCTP (dUTP route): step 2/2. Its function is as follows. This enzyme is involved in nucleotide metabolism: it produces dUMP, the immediate precursor of thymidine nucleotides and it decreases the intracellular concentration of dUTP so that uracil cannot be incorporated into DNA. The polypeptide is Deoxyuridine 5'-triphosphate nucleotidohydrolase (Francisella philomiragia subsp. philomiragia (strain ATCC 25017 / CCUG 19701 / FSC 153 / O#319-036)).